The sequence spans 177 residues: ATP synthase subunit delta (177 aa).

The protein belongs to the ATPase delta chain family. F-type ATPases have 2 components, F(1) - the catalytic core - and F(0) - the membrane proton channel. F(1) has five subunits: alpha(3), beta(3), gamma(1), delta(1), epsilon(1). F(0) has three main subunits: a(1), b(2) and c(10-14). The alpha and beta chains form an alternating ring which encloses part of the gamma chain. F(1) is attached to F(0) by a central stalk formed by the gamma and epsilon chains, while a peripheral stalk is formed by the delta and b chains.

It is found in the cell inner membrane. F(1)F(0) ATP synthase produces ATP from ADP in the presence of a proton or sodium gradient. F-type ATPases consist of two structural domains, F(1) containing the extramembraneous catalytic core and F(0) containing the membrane proton channel, linked together by a central stalk and a peripheral stalk. During catalysis, ATP synthesis in the catalytic domain of F(1) is coupled via a rotary mechanism of the central stalk subunits to proton translocation. Functionally, this protein is part of the stalk that links CF(0) to CF(1). It either transmits conformational changes from CF(0) to CF(1) or is implicated in proton conduction. This Shewanella sp. (strain MR-4) protein is ATP synthase subunit delta.